A 523-amino-acid polypeptide reads, in one-letter code: GMP synthase [glutamine-hydrolyzing] (523 aa).

The region spanning 18–208 (KILIVDFGGQ…LYNVCGAKGD (191 aa)) is the Glutamine amidotransferase type-1 domain. Cys-95 acts as the Nucleophile in catalysis. Active-site residues include His-182 and Glu-184. The GMPS ATP-PPase domain occupies 209 to 398 (WNMKSFLAEA…LGLPDYLVHR (190 aa)). Position 236–242 (236–242 (SGGVDSS)) interacts with ATP.

Homodimer.

The enzyme catalyses XMP + L-glutamine + ATP + H2O = GMP + L-glutamate + AMP + diphosphate + 2 H(+). It participates in purine metabolism; GMP biosynthesis; GMP from XMP (L-Gln route): step 1/1. Its function is as follows. Catalyzes the synthesis of GMP from XMP. The chain is GMP synthase [glutamine-hydrolyzing] from Treponema denticola (strain ATCC 35405 / DSM 14222 / CIP 103919 / JCM 8153 / KCTC 15104).